We begin with the raw amino-acid sequence, 444 residues long: Phosphoglucosamine mutase (444 aa).

Ser-101 serves as the catalytic Phosphoserine intermediate. Mg(2+)-binding residues include Ser-101, Asp-240, Asp-242, and Asp-244. Ser-101 carries the post-translational modification Phosphoserine.

Belongs to the phosphohexose mutase family. The cofactor is Mg(2+). Activated by phosphorylation.

It catalyses the reaction alpha-D-glucosamine 1-phosphate = D-glucosamine 6-phosphate. Functionally, catalyzes the conversion of glucosamine-6-phosphate to glucosamine-1-phosphate. This is Phosphoglucosamine mutase from Sphingopyxis alaskensis (strain DSM 13593 / LMG 18877 / RB2256) (Sphingomonas alaskensis).